The chain runs to 326 residues: Microtubule-associated protein RP/EB family member 2 (326 aa).

Position 9 is a phosphoserine (Ser-9). One can recognise a Calponin-homology (CH) domain in the interval 56–158; the sequence is TMSRHDIIAW…FIQWFKKFYD (103 aa). Tyr-166 is modified (phosphotyrosine). Disordered regions lie at residues 170–239 and 297–326; these read EARQ…DKDL and YASD…QEEY. A DCTN1-binding region spans residues 186-326; it reads QIFNLPKKSH…DQQPQQQEEY (141 aa). The segment covering 199–233 has biased composition (low complexity); the sequence is SPTAGAAKSSPASKPGSTPSRPSSAKRASSSGSAS. 2 positions are modified to phosphoserine: Ser-218 and Ser-235. In terms of domain architecture, EB1 C-terminal spans 235–305; it reads SDKDLETQVI…LYASDEQEGQ (71 aa). Residues 258-301 are APC-binding; that stretch reads EGVEKERDFYFGKLREIELLCQEHGQENDDLVQRLMEVLYASDE. A compositionally biased stretch (acidic residues) spans 300–312; the sequence is DEQEGQTEEPEAE. The span at 317–326 shows a compositional bias: low complexity; that stretch reads DQQPQQQEEY.

The protein belongs to the MAPRE family. Interacts with DCTN1. Interacts with APC (via C-terminal). Interacts with monomeric and polymerized tubulin. Interacts with SLAIN1. Interacts (via the N-terminal region) with BAG1. Interacts with ASB14. Post-translationally, ubiquitinated in an ASB14-dependent manner; leading to proteasomal degradation. In terms of processing, phosphorylated at Ser-235 by CK2 leading to enhanced cell adhesion. Phosphorylated by CDK1 and AURKB during mitosis reduces the binding affinity of MAPRE2 for microtubules. Expressed during early stages of apico-basal epithelial differentiation but down-regulated in most cells at later stages.

The protein localises to the cytoplasm. It localises to the cytoskeleton. The protein resides in the spindle. In terms of biological role, adapter protein that is involved in microtubule polymerization, and spindle function by stabilizing microtubules and anchoring them at centrosomes. Therefore, ensures mitotic progression and genome stability. Acts as a central regulator of microtubule reorganization in apico-basal epithelial differentiation. Plays a role during oocyte meiosis by regulating microtubule dynamics. Participates in neurite growth by interacting with plexin B3/PLXNB3 and microtubule reorganization during apico-basal epithelial differentiation. Plays also an essential role for cell migration and focal adhesion dynamics. Mechanistically, recruits HAX1 to microtubules in order to regulate focal adhesion dynamics. This is Microtubule-associated protein RP/EB family member 2 (Mapre2) from Mus musculus (Mouse).